Reading from the N-terminus, the 276-residue chain is tRNA dimethylallyltransferase (276 aa).

Residues 9–12 (DSLS) are interaction with substrate tRNA.

Belongs to the IPP transferase family. In terms of assembly, monomer. Mg(2+) is required as a cofactor.

It catalyses the reaction adenosine(37) in tRNA + dimethylallyl diphosphate = N(6)-dimethylallyladenosine(37) in tRNA + diphosphate. Its function is as follows. Catalyzes the transfer of a dimethylallyl group onto the adenine at position 37 in tRNAs that read codons beginning with uridine, leading to the formation of N6-(dimethylallyl)adenosine (i(6)A). The polypeptide is tRNA dimethylallyltransferase (miaA) (Helicobacter pylori (strain HPAG1)).